Reading from the N-terminus, the 113-residue chain is Cytochrome c (113 aa).

Ala1 carries the N-acetylalanine modification. Heme c contacts are provided by Cys22, Cys25, and His26. Lys80 bears the N6,N6,N6-trimethyllysine mark. Met88 serves as a coordination point for heme c. The residue at position 94 (Lys94) is an N6,N6,N6-trimethyllysine.

It belongs to the cytochrome c family. Post-translationally, binds 1 heme c group covalently per subunit.

It is found in the mitochondrion intermembrane space. Its function is as follows. Electron carrier protein. The oxidized form of the cytochrome c heme group can accept an electron from the heme group of the cytochrome c1 subunit of cytochrome reductase. Cytochrome c then transfers this electron to the cytochrome oxidase complex, the final protein carrier in the mitochondrial electron-transport chain. The protein is Cytochrome c of Ginkgo biloba (Ginkgo).